The sequence spans 180 residues: Secreted RxLR effector protein 19 (180 aa).

Residues 1 to 19 (MKLLLRALATFVLLNGVDS) form the signal peptide. The region spanning 25–171 (FQKCNVTGGP…IFALGALWGP (147 aa)) is the Jacalin-type lectin domain. The short motif at 52 to 77 (RALRLCGVDFVDGIGVTIWDLSVEEN) is the RxLR-dEER element.

This sequence belongs to the RxLR effector family.

It is found in the secreted. Its subcellular location is the host cytoplasm. It localises to the host nucleus. Functionally, effector that partially suppresses the tobacco programmed cell death induced by cell death-inducing proteins. The chain is Secreted RxLR effector protein 19 from Plasmopara viticola (Downy mildew of grapevine).